A 477-amino-acid chain; its full sequence is Glutamate--tRNA ligase (477 aa).

The short motif at 8-18 is the 'HIGH' region element; sequence PSPTGTLHIGT. Residues 247–251 carry the 'KMSKS' region motif; it reads KLSKR. An ATP-binding site is contributed by K250.

The protein belongs to the class-I aminoacyl-tRNA synthetase family. Glutamate--tRNA ligase type 1 subfamily. As to quaternary structure, monomer.

Its subcellular location is the cytoplasm. The enzyme catalyses tRNA(Glu) + L-glutamate + ATP = L-glutamyl-tRNA(Glu) + AMP + diphosphate. Functionally, catalyzes the attachment of glutamate to tRNA(Glu) in a two-step reaction: glutamate is first activated by ATP to form Glu-AMP and then transferred to the acceptor end of tRNA(Glu). The protein is Glutamate--tRNA ligase of Synechococcus sp. (strain CC9902).